The following is a 141-amino-acid chain: Hemoglobin subunit alpha (141 aa).

The region spanning 1 to 141 (VLSAADKTNV…VSTVLTSKYR (141 aa)) is the Globin domain. Phosphoserine is present on serine 3. Residue lysine 7 is modified to N6-succinyllysine. Residue threonine 8 is modified to Phosphothreonine. Lysine 11 carries the post-translational modification N6-succinyllysine. Lysine 16 carries the post-translational modification N6-acetyllysine; alternate. At lysine 16 the chain carries N6-succinyllysine; alternate. The residue at position 24 (tyrosine 24) is a Phosphotyrosine. Serine 35 carries the post-translational modification Phosphoserine. An N6-succinyllysine modification is found at lysine 40. Phosphoserine is present on serine 49. Residue histidine 58 coordinates O2. Histidine 87 serves as a coordination point for heme b. Serine 102 is subject to Phosphoserine. Residue threonine 108 is modified to Phosphothreonine. A phosphoserine mark is found at serine 124 and serine 131. Residues threonine 134 and threonine 137 each carry the phosphothreonine modification. Serine 138 is subject to Phosphoserine.

This sequence belongs to the globin family. As to quaternary structure, heterotetramer of two alpha chains and two beta chains. Red blood cells.

Involved in oxygen transport from the lung to the various peripheral tissues. The chain is Hemoglobin subunit alpha from Tamiasciurus hudsonicus (American red squirrel).